A 548-amino-acid polypeptide reads, in one-letter code: Folylpolyglutamate synthase (548 aa).

An ATP-binding site is contributed by 130–133; it reads GKGS. Residues Ser-157, Glu-234, and His-262 each contribute to the Mg(2+) site. The ATP site is built by Arg-382 and Asp-396.

The protein belongs to the folylpolyglutamate synthase family. A monovalent cation serves as cofactor.

It is found in the mitochondrion inner membrane. Its subcellular location is the mitochondrion matrix. The protein resides in the cytoplasm. It carries out the reaction (6S)-5,6,7,8-tetrahydrofolyl-(gamma-L-Glu)(n) + L-glutamate + ATP = (6S)-5,6,7,8-tetrahydrofolyl-(gamma-L-Glu)(n+1) + ADP + phosphate + H(+). Its pathway is cofactor biosynthesis; tetrahydrofolylpolyglutamate biosynthesis. Its function is as follows. Catalyzes conversion of folates to polyglutamate derivatives allowing concentration of folate compounds in the cell and the intracellular retention of these cofactors, which are important substrates for most of the folate-dependent enzymes that are involved in one-carbon transfer reactions involved in purine, pyrimidine and amino acid synthesis. Required for methionine synthesis and maintenance of intact mitochondrial DNA. Involved in telomere maintenance. In Saccharomyces cerevisiae (strain AWRI796) (Baker's yeast), this protein is Folylpolyglutamate synthase.